We begin with the raw amino-acid sequence, 185 residues long: Intraflagellar transport protein 22 homolog (185 aa).

Residues 10–17 (GPCESGKT), 63–67 (DCGGD), and 123–126 (HKPG) contribute to the GTP site. A Phosphoserine modification is found at Ser137.

The protein belongs to the small GTPase superfamily. Rab family. Component of the IFT complex B, at least composed of IFT20, IFT22, IFT25, IFT27, IFT46, IFT52, TRAF3IP1/IFT54, IFT57, IFT74, IFT80, IFT81, and IFT88. Interacts with IFT88. Interacts with CFAP61.

The protein resides in the cell projection. The protein localises to the cilium. Small GTPase-like component of the intraflagellar transport (IFT) complex B. This is Intraflagellar transport protein 22 homolog (Ift22) from Rattus norvegicus (Rat).